The primary structure comprises 941 residues: Protocadherin alpha-12 (941 aa).

The N-terminal stretch at 1–29 (MVIIGPRGPGSQRLLLSLLLLAAWEVGSG) is a signal peptide. Cadherin domains lie at 30-133 (QLHY…PPVF), 134-242 (RERE…GPAF), 243-350 (DKPS…VPEV), 351-455 (MVTS…APAF), 456-565 (AQPE…APAL), and 581-678 (VPRS…APKT). The Extracellular portion of the chain corresponds to 30–697 (QLHYSVYEEA…DPEAALVDIN (668 aa)). Residues N257 and N265 are each glycosylated (N-linked (GlcNAc...) asparagine). An N-linked (GlcNAc...) asparagine glycan is attached at N548. The chain crosses the membrane as a helical span at residues 698–718 (VYLIIAICAVSSLLVLTLLLY). Residues 719–941 (TALRCSAPPT…GNSTTDNSDQ (223 aa)) lie on the Cytoplasmic side of the membrane. 5 PXXP repeats span residues 734–737 (PGKP), 790–793 (PRQP), 823–826 (PGGP), 863–866 (GPGN), and 882–885 (PGSP). The segment at 734 to 885 (PGKPTLVCSS…PDKFIIPGSP (152 aa)) is 5 X 4 AA repeats of P-X-X-P. Positions 818-941 (ILRAGPGGPD…GNSTTDNSDQ (124 aa)) are disordered. Over residues 900 to 914 (DKSDFITFGKKEETK) the composition is skewed to basic and acidic residues.

The protein localises to the cell membrane. Potential calcium-dependent cell-adhesion protein. May be involved in the establishment and maintenance of specific neuronal connections in the brain. The chain is Protocadherin alpha-12 (PCDHA12) from Homo sapiens (Human).